The chain runs to 439 residues: Chromosomal replication initiator protein DnaA (439 aa).

The interval 1–75 (MESWSRCLER…GIREVVLAIG (75 aa)) is domain I, interacts with DnaA modulators. The segment at 75-101 (GSRPKTTELPVPVDTTGRLSSTVPFNG) is domain II. Residues 102-319 (NLDTHYNFDN…GALNTLVARA (218 aa)) form a domain III, AAA+ region region. ATP is bound by residues Gly-147, Gly-149, Lys-150, and Thr-151. The domain IV, binds dsDNA stretch occupies residues 320–439 (NFTGRAVTIE…WDKLMRKFSE (120 aa)).

It belongs to the DnaA family. In terms of assembly, oligomerizes as a right-handed, spiral filament on DNA at oriC.

It localises to the cytoplasm. Its function is as follows. Plays an essential role in the initiation and regulation of chromosomal replication. ATP-DnaA binds to the origin of replication (oriC) to initiate formation of the DNA replication initiation complex once per cell cycle. Binds the DnaA box (a 9 base pair repeat at the origin) and separates the double-stranded (ds)DNA. Forms a right-handed helical filament on oriC DNA; dsDNA binds to the exterior of the filament while single-stranded (ss)DNA is stabiized in the filament's interior. The ATP-DnaA-oriC complex binds and stabilizes one strand of the AT-rich DNA unwinding element (DUE), permitting loading of DNA polymerase. After initiation quickly degrades to an ADP-DnaA complex that is not apt for DNA replication. Binds acidic phospholipids. The sequence is that of Chromosomal replication initiator protein DnaA from Xylella fastidiosa (strain 9a5c).